The primary structure comprises 325 residues: tRNA(Ile)-lysidine synthase (325 aa).

Residue 34–39 participates in ATP binding; the sequence is SGGQDS.

The protein belongs to the tRNA(Ile)-lysidine synthase family.

It localises to the cytoplasm. It carries out the reaction cytidine(34) in tRNA(Ile2) + L-lysine + ATP = lysidine(34) in tRNA(Ile2) + AMP + diphosphate + H(+). Its function is as follows. Ligates lysine onto the cytidine present at position 34 of the AUA codon-specific tRNA(Ile) that contains the anticodon CAU, in an ATP-dependent manner. Cytidine is converted to lysidine, thus changing the amino acid specificity of the tRNA from methionine to isoleucine. This Synechococcus sp. (strain ATCC 27144 / PCC 6301 / SAUG 1402/1) (Anacystis nidulans) protein is tRNA(Ile)-lysidine synthase.